A 720-amino-acid polypeptide reads, in one-letter code: Polyribonucleotide nucleotidyltransferase (720 aa).

Positions 485 and 491 each coordinate Mg(2+). The 64-residue stretch at 552–615 (PRIHTIKINP…EAIRRIQALT (64 aa)) folds into the KH domain. The S1 motif domain maps to 621 to 689 (GRIYEGKVTR…RQGRIRLSIK (69 aa)). The interval 697–720 (PAAESVAESAPAQEAVVEQVPMTE) is disordered. The segment covering 698–720 (AAESVAESAPAQEAVVEQVPMTE) has biased composition (low complexity).

This sequence belongs to the polyribonucleotide nucleotidyltransferase family. In terms of assembly, component of the RNA degradosome, which is a multiprotein complex involved in RNA processing and mRNA degradation. The cofactor is Mg(2+).

The protein localises to the cytoplasm. It carries out the reaction RNA(n+1) + phosphate = RNA(n) + a ribonucleoside 5'-diphosphate. Functionally, involved in mRNA degradation. Catalyzes the phosphorolysis of single-stranded polyribonucleotides processively in the 3'- to 5'-direction. The protein is Polyribonucleotide nucleotidyltransferase of Tolumonas auensis (strain DSM 9187 / NBRC 110442 / TA 4).